Here is a 399-residue protein sequence, read N- to C-terminus: S-adenosylmethionine synthase (399 aa).

Position 17 (His17) interacts with ATP. A Mg(2+)-binding site is contributed by Asp19. Glu45 is a binding site for K(+). The L-methionine site is built by Glu58 and Gln101. The tract at residues 101–111 is flexible loop; that stretch reads QSADIAMGVDQ. ATP-binding positions include 177–179, 244–245, Asp253, 259–260, Ala276, and Lys280; these read DGK, RF, and RK. L-methionine is bound at residue Asp253. Lys284 is an L-methionine binding site.

This sequence belongs to the AdoMet synthase family. In terms of assembly, homotetramer; dimer of dimers. Mg(2+) serves as cofactor. Requires K(+) as cofactor.

It is found in the cytoplasm. The enzyme catalyses L-methionine + ATP + H2O = S-adenosyl-L-methionine + phosphate + diphosphate. The protein operates within amino-acid biosynthesis; S-adenosyl-L-methionine biosynthesis; S-adenosyl-L-methionine from L-methionine: step 1/1. Its function is as follows. Catalyzes the formation of S-adenosylmethionine (AdoMet) from methionine and ATP. The overall synthetic reaction is composed of two sequential steps, AdoMet formation and the subsequent tripolyphosphate hydrolysis which occurs prior to release of AdoMet from the enzyme. This chain is S-adenosylmethionine synthase, found in Bacillus mycoides (strain KBAB4) (Bacillus weihenstephanensis).